The chain runs to 651 residues: Mitogen-activated protein kinase kinase kinase 2 (651 aa).

One can recognise a Protein kinase domain in the interval 68–330 (WRKGQLIGRG…ASELLKHPFV (263 aa)). Residues 74–82 (IGRGAFGTV) and K97 each bind ATP. Positions 105–130 (CASKEKTQAHIQELEEEVKLLKNLSH) form a coiled coil. Residues K108 and K110 each participate in a glycyl lysine isopeptide (Lys-Gly) (interchain with G-Cter in ubiquitin) cross-link. D196 serves as the catalytic Proton acceptor. Disordered regions lie at residues 460-483 (GNGE…DENE), 537-601 (RGFL…VALS), and 618-651 (KRRE…SPGK). Over residues 464–477 (TETKVSMEVDHPSY) the composition is skewed to basic and acidic residues. Residues 570–599 (SPESGNSSGAPKNSNASAGAEQESNSQSVA) are compositionally biased toward polar residues. Residues 605–628 (RKWKEELDQELERKRREITRQAGM) are a coiled coil.

Belongs to the protein kinase superfamily. STE Ser/Thr protein kinase family. MAP kinase kinase kinase subfamily. Expressed in roots and flowers.

The protein localises to the cytoplasm. It is found in the cytoskeleton. It carries out the reaction L-seryl-[protein] + ATP = O-phospho-L-seryl-[protein] + ADP + H(+). The enzyme catalyses L-threonyl-[protein] + ATP = O-phospho-L-threonyl-[protein] + ADP + H(+). Its function is as follows. Involved in cortical microtubules organization and stabilization by regulating the phosphorylation state of microtubule-associated proteins such as MAP65-1. This is Mitogen-activated protein kinase kinase kinase 2 (ANP2) from Arabidopsis thaliana (Mouse-ear cress).